The sequence spans 101 residues: MVKHSRGYRTRSRSLLRKSPRERGAVPSLSRLMVEYKEGDKVVIKINPSVHSGMPHRRYQGKVGKIIGKRGRAYLVSVTLGDKEKVIIVRPEHLVSFSSSG.

Basic residues predominate over residues 1–18; that stretch reads MVKHSRGYRTRSRSLLRK. Residues 1–23 form a disordered region; that stretch reads MVKHSRGYRTRSRSLLRKSPRER.

It belongs to the eukaryotic ribosomal protein eL21 family.

This Saccharolobus islandicus (strain Y.N.15.51 / Yellowstone #2) (Sulfolobus islandicus) protein is Large ribosomal subunit protein eL21.